The chain runs to 478 residues: Kynureninase (478 aa).

Residues Leu150, Thr151, 178–181 (FPSD), Ser234, Asp263, His266, and Tyr288 each bind pyridoxal 5'-phosphate. N6-(pyridoxal phosphate)lysine is present on Lys289. The pyridoxal 5'-phosphate site is built by Trp318 and Asn346.

This sequence belongs to the kynureninase family. In terms of assembly, homodimer. Pyridoxal 5'-phosphate serves as cofactor.

The protein localises to the cytoplasm. It catalyses the reaction L-kynurenine + H2O = anthranilate + L-alanine + H(+). The catalysed reaction is 3-hydroxy-L-kynurenine + H2O = 3-hydroxyanthranilate + L-alanine + H(+). The protein operates within amino-acid degradation; L-kynurenine degradation; L-alanine and anthranilate from L-kynurenine: step 1/1. It functions in the pathway cofactor biosynthesis; NAD(+) biosynthesis; quinolinate from L-kynurenine: step 2/3. Functionally, catalyzes the cleavage of L-kynurenine (L-Kyn) and L-3-hydroxykynurenine (L-3OHKyn) into anthranilic acid (AA) and 3-hydroxyanthranilic acid (3-OHAA), respectively. The sequence is that of Kynureninase from Caenorhabditis elegans.